Here is a 264-residue protein sequence, read N- to C-terminus: Undecaprenyl-diphosphatase (264 aa).

The next 8 membrane-spanning stretches (helical) occupy residues 1–21, 39–59, 87–107, 111–131, 144–164, 187–207, 208–228, and 244–264; these read MDLI…FLPI, QGLA…AVYF, WYLI…DDLI, LRST…LWVA, IALS…IPGT, FSFL…GLQL, VLSA…LSAV, and IGML…FIAV.

Belongs to the UppP family.

The protein localises to the cell inner membrane. The catalysed reaction is di-trans,octa-cis-undecaprenyl diphosphate + H2O = di-trans,octa-cis-undecaprenyl phosphate + phosphate + H(+). Catalyzes the dephosphorylation of undecaprenyl diphosphate (UPP). Confers resistance to bacitracin. This Teredinibacter turnerae (strain ATCC 39867 / T7901) protein is Undecaprenyl-diphosphatase.